We begin with the raw amino-acid sequence, 227 residues long: Cytochrome c oxidase subunit 2 (227 aa).

Over 1–14 the chain is Mitochondrial intermembrane; it reads MAYPFQLGLQDATS. A helical transmembrane segment spans residues 15–45; that stretch reads PIMEELMNFHDHTLMIVFLISSLVLYIISLM. Topologically, residues 46-59 are mitochondrial matrix; the sequence is LTTKLTHTSTMDAQ. The chain crosses the membrane as a helical span at residues 60 to 87; that stretch reads EVETIWTILPAAILILIALPSLRILYMM. Over 88-227 the chain is Mitochondrial intermembrane; that stretch reads DEINNPVLTV…YFENWSASMI (140 aa). The Cu cation site is built by histidine 161, cysteine 196, glutamate 198, cysteine 200, histidine 204, and methionine 207. A Mg(2+)-binding site is contributed by glutamate 198.

It belongs to the cytochrome c oxidase subunit 2 family. In terms of assembly, component of the cytochrome c oxidase (complex IV, CIV), a multisubunit enzyme composed of 14 subunits. The complex is composed of a catalytic core of 3 subunits MT-CO1, MT-CO2 and MT-CO3, encoded in the mitochondrial DNA, and 11 supernumerary subunits COX4I, COX5A, COX5B, COX6A, COX6B, COX6C, COX7A, COX7B, COX7C, COX8 and NDUFA4, which are encoded in the nuclear genome. The complex exists as a monomer or a dimer and forms supercomplexes (SCs) in the inner mitochondrial membrane with NADH-ubiquinone oxidoreductase (complex I, CI) and ubiquinol-cytochrome c oxidoreductase (cytochrome b-c1 complex, complex III, CIII), resulting in different assemblies (supercomplex SCI(1)III(2)IV(1) and megacomplex MCI(2)III(2)IV(2)). Found in a complex with TMEM177, COA6, COX18, COX20, SCO1 and SCO2. Interacts with TMEM177 in a COX20-dependent manner. Interacts with COX20. Interacts with COX16. Cu cation serves as cofactor.

The protein resides in the mitochondrion inner membrane. The enzyme catalyses 4 Fe(II)-[cytochrome c] + O2 + 8 H(+)(in) = 4 Fe(III)-[cytochrome c] + 2 H2O + 4 H(+)(out). Functionally, component of the cytochrome c oxidase, the last enzyme in the mitochondrial electron transport chain which drives oxidative phosphorylation. The respiratory chain contains 3 multisubunit complexes succinate dehydrogenase (complex II, CII), ubiquinol-cytochrome c oxidoreductase (cytochrome b-c1 complex, complex III, CIII) and cytochrome c oxidase (complex IV, CIV), that cooperate to transfer electrons derived from NADH and succinate to molecular oxygen, creating an electrochemical gradient over the inner membrane that drives transmembrane transport and the ATP synthase. Cytochrome c oxidase is the component of the respiratory chain that catalyzes the reduction of oxygen to water. Electrons originating from reduced cytochrome c in the intermembrane space (IMS) are transferred via the dinuclear copper A center (CU(A)) of subunit 2 and heme A of subunit 1 to the active site in subunit 1, a binuclear center (BNC) formed by heme A3 and copper B (CU(B)). The BNC reduces molecular oxygen to 2 water molecules using 4 electrons from cytochrome c in the IMS and 4 protons from the mitochondrial matrix. The sequence is that of Cytochrome c oxidase subunit 2 (MT-CO2) from Leggadina forresti (Forrest's mouse).